The sequence spans 576 residues: MAGUK p55 subfamily member 2 (576 aa).

L27 domains are found at residues 8-60 and 84-142; these read SETA…FMQQ and LEAV…YETP. S42 is subject to Phosphoserine. T141 bears the Phosphothreonine mark. S145 is subject to Phosphoserine. One can recognise a PDZ domain in the interval 185-240; sequence ELVIARILHGGMVAQQGLLHVGDIIKEVNGQPVGSDPRALQELLRNASGSVILKIL. The SH3 domain occupies 249 to 317; that stretch reads PRQVFVKCHF…PSQLLEEKRK (69 aa). Residues 374–561 enclose the Guanylate kinase-like domain; that stretch reads RKTLVLIGAQ…TFRELQTAME (188 aa).

It belongs to the MAGUK family. In terms of assembly, can homomultimerise. Interacts with CACNG2. Interacts (via the SH3-Guanylate kinase-like sub-module) with DLG4/PSD95 and DLGAP1/GKAP. Interacts (via the PDZ domain) with CADM1 (via C-terminus). Interacts with KCNN2/SK2 (via N-terminal domain). Interacts with SRC. Post-translationally, phosphorylated by SRC.

It localises to the cytoplasm. It is found in the cytoskeleton. The protein resides in the membrane. The protein localises to the cell projection. Its subcellular location is the dendrite. It localises to the postsynaptic density. In terms of biological role, postsynaptic MAGUK scaffold protein that links CADM1 cell adhesion molecules to core components of the postsynaptic density. In CA1 pyramidal neurons, required for synaptic KCNN2-containing channel function and long-term potentiation expression. Seems to negatively regulate SRC function in epithelial cells. This is MAGUK p55 subfamily member 2 from Homo sapiens (Human).